The primary structure comprises 217 residues: Adenylate kinase (217 aa).

An ATP-binding site is contributed by Gly-10–Thr-15. An NMP region spans residues Ser-30–Val-59. AMP contacts are provided by residues Thr-31, Arg-36, Leu-57 to Val-59, Gly-85 to Arg-88, and Gln-92. Residues Gly-126–Asp-163 form an LID region. Residue Arg-127 participates in ATP binding. Cys-130 and Cys-133 together coordinate Zn(2+). Ser-136–Tyr-137 is an ATP binding site. 2 residues coordinate Zn(2+): Cys-150 and Cys-153. AMP-binding residues include Arg-160 and Arg-171. Residue Glu-199 coordinates ATP.

It belongs to the adenylate kinase family. Monomer.

The protein resides in the cytoplasm. It carries out the reaction AMP + ATP = 2 ADP. It functions in the pathway purine metabolism; AMP biosynthesis via salvage pathway; AMP from ADP: step 1/1. Its function is as follows. Catalyzes the reversible transfer of the terminal phosphate group between ATP and AMP. Plays an important role in cellular energy homeostasis and in adenine nucleotide metabolism. The protein is Adenylate kinase of Acetivibrio thermocellus (strain ATCC 27405 / DSM 1237 / JCM 9322 / NBRC 103400 / NCIMB 10682 / NRRL B-4536 / VPI 7372) (Clostridium thermocellum).